An 86-amino-acid polypeptide reads, in one-letter code: Small ribosomal subunit protein eS21 (86 aa).

This sequence belongs to the eukaryotic ribosomal protein eS21 family. As to quaternary structure, component of the 40S small ribosomal subunit.

The protein resides in the cytoplasm. The protein localises to the cytosol. It is found in the rough endoplasmic reticulum. The sequence is that of Small ribosomal subunit protein eS21 (RPS21) from Suberites domuncula (Sponge).